A 121-amino-acid chain; its full sequence is Large ribosomal subunit protein bL19 (121 aa).

This sequence belongs to the bacterial ribosomal protein bL19 family.

In terms of biological role, this protein is located at the 30S-50S ribosomal subunit interface and may play a role in the structure and function of the aminoacyl-tRNA binding site. The protein is Large ribosomal subunit protein bL19 of Porphyromonas gingivalis (strain ATCC BAA-308 / W83).